Here is a 470-residue protein sequence, read N- to C-terminus: MAPTEIKTLSFLDSSKSNYNLNPLKFQGGFAFKRKDSGCTAAKRVHCSAQSQSPPPAWPGRAFPEPGRMTWEGPKPISVIGSTGSIGTQTLDIVAENPDKFRIVALAAGSNVTLLADQVKAFKPKLVSVKDESLISELKEALAGFEDMPEIIPGEQGMIEVARHPDAVTVVTGIVGCAGLKPTVAAIEAGKDIALANKETLIAGGPFVLPLAKKHNVKILPADSEHSAIFQCIQGLPEGALRRIILTASGGAFRDLPVEKLKEVKVADALKHPNWNMGKKITVDSATLFNKGLEVIEAHYLFGAEYDDIEIVIHPQSIIHSMVETQDSSVLAQLGWPDMRLPILYTLSWPERIYCSEITWPRLDLCKVDLTFKKPDNVKYPSMDLAYAAGRAGGTMTGVLSAANEKAVEMFIDEKIGYLDIFKVVELTCDKHRSEMAVSPSLEEIVHYDQWARDYAATVLKSAGLSPALV.

NADPH contacts are provided by T83, G84, S85, I86, G109, N111, and N197. A 1-deoxy-D-xylulose 5-phosphate-binding site is contributed by K198. E199 lines the NADPH pocket. D223 contributes to the Mn(2+) binding site. Residues S224, E225, S249, and H272 each contribute to the 1-deoxy-D-xylulose 5-phosphate site. Residue E225 participates in Mn(2+) binding. Residue G278 participates in NADPH binding. 1-deoxy-D-xylulose 5-phosphate-binding residues include S285, N290, K291, and E294. E294 contributes to the Mn(2+) binding site.

The protein belongs to the DXR family. Requires Mn(2+) as cofactor. Mg(2+) serves as cofactor.

The protein localises to the plastid. The protein resides in the chloroplast. The enzyme catalyses 2-C-methyl-D-erythritol 4-phosphate + NADP(+) = 1-deoxy-D-xylulose 5-phosphate + NADPH + H(+). It participates in isoprenoid biosynthesis; isopentenyl diphosphate biosynthesis via DXP pathway; isopentenyl diphosphate from 1-deoxy-D-xylulose 5-phosphate: step 1/6. In terms of biological role, catalyzes the NADPH-dependent rearrangement and reduction of 1-deoxy-D-xylulose-5-phosphate (DXP) to 2-C-methyl-D-erythritol 4-phosphate (MEP). The protein is 1-deoxy-D-xylulose 5-phosphate reductoisomerase, chloroplastic (DXR) of Mentha piperita (Peppermint).